A 286-amino-acid polypeptide reads, in one-letter code: ATP-binding protein ChvD (286 aa).

The ABC transporter domain maps to lysine 21–asparagine 85.

It belongs to the ABC transporter superfamily.

In terms of biological role, the induction of virG by growth under acidic conditions and by phosphate starvation, in the absence of plant inducers, is influenced by ChvD. In Rhizobium radiobacter (Agrobacterium tumefaciens), this protein is ATP-binding protein ChvD (chvD).